We begin with the raw amino-acid sequence, 177 residues long: Large ribosomal subunit protein uL6 (177 aa).

This sequence belongs to the universal ribosomal protein uL6 family. As to quaternary structure, part of the 50S ribosomal subunit.

Functionally, this protein binds to the 23S rRNA, and is important in its secondary structure. It is located near the subunit interface in the base of the L7/L12 stalk, and near the tRNA binding site of the peptidyltransferase center. This Actinobacillus pleuropneumoniae serotype 5b (strain L20) protein is Large ribosomal subunit protein uL6.